Reading from the N-terminus, the 78-residue chain is Toxin-like protein 10 (78 aa).

Positions 1–23 (MKATALLIAVFILFSVFGDMGYC) are cleaved as a signal peptide.

In terms of processing, contains 4 disulfide bonds. Expressed by the venom gland.

It is found in the secreted. This chain is Toxin-like protein 10, found in Urodacus yaschenkoi (Inland robust scorpion).